The sequence spans 206 residues: Large ribosomal subunit protein uL4 (206 aa).

The segment at 48-75 is disordered; it reads TQSAKTRAEVSGGGIKPWRQKGTGRARQ.

Belongs to the universal ribosomal protein uL4 family. In terms of assembly, part of the 50S ribosomal subunit.

Functionally, one of the primary rRNA binding proteins, this protein initially binds near the 5'-end of the 23S rRNA. It is important during the early stages of 50S assembly. It makes multiple contacts with different domains of the 23S rRNA in the assembled 50S subunit and ribosome. Forms part of the polypeptide exit tunnel. This chain is Large ribosomal subunit protein uL4, found in Clostridium botulinum (strain Loch Maree / Type A3).